Here is a 1034-residue protein sequence, read N- to C-terminus: Receptor-type guanylate cyclase gcy-25 (1034 aa).

The first 16 residues, 1–16 (MLLLLLLLKISTFVDS), serve as a signal peptide directing secretion. The Extracellular portion of the chain corresponds to 17–409 (FQIGHLEFEN…YDNNLCSDFH (393 aa)). N-linked (GlcNAc...) asparagine glycans are attached at residues Asn28, Asn224, Asn301, Asn308, and Asn373. Residues 410-430 (VFMIAAIVFSILLIPMAIAFY) form a helical membrane-spanning segment. Topologically, residues 431-1034 (LQRKEHLIQQ…DNSKKMFLNV (604 aa)) are cytoplasmic. One can recognise a Protein kinase domain in the interval 464–749 (RVSTISTARA…KITDAVNREF (286 aa)). ATP-binding positions include 470–478 (TARASYSSI) and Lys497. Residues 758–785 (IDQMIEMIDEYSANLEQIVAERTRELEQ) adopt a coiled-coil conformation. Residues 821 to 951 (TLLVVDVCQF…DTVNMACRMA (131 aa)) enclose the Guanylate cyclase domain.

This sequence belongs to the adenylyl cyclase class-4/guanylyl cyclase family. Expressed in AQR, PQR and URX sensory neurons.

Its subcellular location is the cell membrane. It catalyses the reaction GTP = 3',5'-cyclic GMP + diphosphate. Its function is as follows. Guanylate cyclase involved in the production of the second messenger cGMP. This Caenorhabditis elegans protein is Receptor-type guanylate cyclase gcy-25.